The chain runs to 313 residues: Foldase protein PrsA (313 aa).

A signal peptide spans methionine 1 to alanine 20. Residue cysteine 21 is the site of N-palmitoyl cysteine attachment. The S-diacylglycerol cysteine moiety is linked to residue cysteine 21. The 99-residue stretch at threonine 143–lysine 241 folds into the PpiC domain.

It belongs to the PrsA family.

Its subcellular location is the cell membrane. It carries out the reaction [protein]-peptidylproline (omega=180) = [protein]-peptidylproline (omega=0). Its function is as follows. Plays a major role in protein secretion by helping the post-translocational extracellular folding of several secreted proteins. This is Foldase protein PrsA from Streptococcus pneumoniae (strain P1031).